Consider the following 328-residue polypeptide: Probable ABC transporter permease YtrC (328 aa).

8 consecutive transmembrane segments (helical) span residues 16-36, 60-80, 110-130, 144-164, 167-187, 236-256, 277-297, and 300-320; these read VVILLSIAFLVLANPLSIVNT, ISNLIDINWVPGVILAVCFLG, GFVIVLSQLIGFLLAWLLILV, IGVIVISFMAFSLVMAAGALT, AFAQLLTAFSAAILPYLIIAL, YLLLIPAVMSMLFYLIGFISF, VQILVMAFGILGFGLFGYYTG, and IIGYILGMIIGAVAGFFVSYF.

The protein belongs to the ABC-5 integral membrane protein family. In terms of assembly, the complex is composed of 2 ATP-binding proteins (YtrB and YtrE), 2 transmembrane proteins (YtrC and YtrD) and a solute-binding protein (YtrF).

The protein resides in the cell membrane. In terms of biological role, part of the ABC transporter complex YtrBCDEF that plays a role in acetoin utilization during stationary phase and sporulation. This is Probable ABC transporter permease YtrC (ytrC) from Bacillus subtilis (strain 168).